The sequence spans 386 residues: Queuine tRNA-ribosyltransferase (386 aa).

Aspartate 102 acts as the Proton acceptor in catalysis. Residues 102–106 (DSGGY), aspartate 156, glutamine 203, and glycine 230 each bind substrate. The interval 261–267 (GVGKPDD) is RNA binding. Residue aspartate 280 is the Nucleophile of the active site. The interval 285 to 289 (TRSGR) is RNA binding; important for wobble base 34 recognition. 4 residues coordinate Zn(2+): cysteine 318, cysteine 320, cysteine 323, and histidine 349.

The protein belongs to the queuine tRNA-ribosyltransferase family. Homodimer. Within each dimer, one monomer is responsible for RNA recognition and catalysis, while the other monomer binds to the replacement base PreQ1. It depends on Zn(2+) as a cofactor.

It catalyses the reaction 7-aminomethyl-7-carbaguanine + guanosine(34) in tRNA = 7-aminomethyl-7-carbaguanosine(34) in tRNA + guanine. It participates in tRNA modification; tRNA-queuosine biosynthesis. In terms of biological role, catalyzes the base-exchange of a guanine (G) residue with the queuine precursor 7-aminomethyl-7-deazaguanine (PreQ1) at position 34 (anticodon wobble position) in tRNAs with GU(N) anticodons (tRNA-Asp, -Asn, -His and -Tyr). Catalysis occurs through a double-displacement mechanism. The nucleophile active site attacks the C1' of nucleotide 34 to detach the guanine base from the RNA, forming a covalent enzyme-RNA intermediate. The proton acceptor active site deprotonates the incoming PreQ1, allowing a nucleophilic attack on the C1' of the ribose to form the product. After dissociation, two additional enzymatic reactions on the tRNA convert PreQ1 to queuine (Q), resulting in the hypermodified nucleoside queuosine (7-(((4,5-cis-dihydroxy-2-cyclopenten-1-yl)amino)methyl)-7-deazaguanosine). The protein is Queuine tRNA-ribosyltransferase of Zymomonas mobilis subsp. mobilis (strain ATCC 31821 / ZM4 / CP4).